The sequence spans 473 residues: Photosystem II CP43 reaction center protein (473 aa).

The propeptide occupies 1–14 (MKTLYSLRRFYPVE). Position 15 is an N-acetylthreonine (threonine 15). Threonine 15 is modified (phosphothreonine). 5 helical membrane passes run 69–93 (LFEV…PHLA), 134–155 (LLGP…KDRN), 178–200 (KALY…RKIT), 255–275 (KPFA…LSYS), and 291–312 (WFNN…ASQA). Position 367 (glutamate 367) interacts with [CaMn4O5] cluster. Residues 426-473 (LSTSHFVLGFFLFVGHLWHAGRARAAAAGFEKGIDRDFEPVLSMTPLN) constitute a propeptide that is removed on maturation. A helical membrane pass occupies residues 447-471 (RARAAAAGFEKGIDRDFEPVLSMTP).

It belongs to the PsbB/PsbC family. PsbC subfamily. In terms of assembly, PSII is composed of 1 copy each of membrane proteins PsbA, PsbB, PsbC, PsbD, PsbE, PsbF, PsbH, PsbI, PsbJ, PsbK, PsbL, PsbM, PsbT, PsbX, PsbY, PsbZ, Psb30/Ycf12, at least 3 peripheral proteins of the oxygen-evolving complex and a large number of cofactors. It forms dimeric complexes. Requires Binds multiple chlorophylls and provides some of the ligands for the Ca-4Mn-5O cluster of the oxygen-evolving complex. It may also provide a ligand for a Cl- that is required for oxygen evolution. PSII binds additional chlorophylls, carotenoids and specific lipids. as cofactor. Over time a tryptophan in the fifth lumenal loop is converted to 2-hydroxy-2,3-dihydrotryptophan, 2-oxo-2,3-dihydrotryptophan, and kynurenine by oxidizing species from the active site. This oxidation targets the protein for turnover.

The protein localises to the plastid. It localises to the chloroplast thylakoid membrane. Its function is as follows. One of the components of the core complex of photosystem II (PSII). It binds chlorophyll and helps catalyze the primary light-induced photochemical processes of PSII. PSII is a light-driven water:plastoquinone oxidoreductase, using light energy to abstract electrons from H(2)O, generating O(2) and a proton gradient subsequently used for ATP formation. In Spinacia oleracea (Spinach), this protein is Photosystem II CP43 reaction center protein.